The chain runs to 1079 residues: Psi-producing oxygenase A (1079 aa).

Residues 105-446 (TNTFLTTLWN…DGSYDDNDLV (342 aa)) are linoleate 8R-lipoxygenase. His202 lines the heme b pocket. The active site involves Tyr374. His377 is a binding site for heme b. The 9,12-octadecadienoate 8-hydroperoxide 8R-isomerase stretch occupies residues 654–1079 (QFINSHSACM…WDGDLPEVKE (426 aa)).

Belongs to the peroxidase family. In terms of assembly, homotetramer. It depends on heme b as a cofactor.

The enzyme catalyses (9Z,12Z)-octadecadienoate + O2 = (8R,9Z,12Z)-8-hydroperoxyoctadeca-9,12-dienoate. It catalyses the reaction (8R,9Z,12Z)-8-hydroperoxyoctadeca-9,12-dienoate = (5S,8R,9Z,12Z)-5,8-dihydroxyoctadeca-9,12-dienoate. Functionally, bifunctional heme-containing enzyme that oxidizes linoleic acid to (8R,9Z,12Z)-8-hydroperoxyoctadeca-9,12-dienoate (within the N-terminal heme peroxidase domain), which is subsequently isomerized to (5S,8R,9Z,12Z)-5,8-dihydroxyoctadeca-9,12-dienoate (within the C-terminal P450 heme thiolate domain). Oxidized unsaturated fatty acids, so-called oxylipins, derived from endogenous fatty acids, influence the development of the asexual conidiophores and sexual cleistothecia and regulate the secondary metabolism. These substances were collectively named psi factors and are primarily a mixture of hydroxylated oleic, linoleic and alpha-linolenic acids. They are termed psi-beta, psi-alpha, and psi-gamma, respectively. Oxylipins may also serve as activators of mammalian immune responses contributing to enhanced resistance to opportunistic fungi and as factors that modulate fungal development contributing to resistance to host defenses. The sequence is that of Psi-producing oxygenase A (ppoA) from Aspergillus fumigatus (strain ATCC MYA-4609 / CBS 101355 / FGSC A1100 / Af293) (Neosartorya fumigata).